Here is a 106-residue protein sequence, read N- to C-terminus: RNA-binding protein Hfq (106 aa).

Residues 9–68 (DPYLNALRKERVPVSIYLVNGIKLQGQIESFDAFVILLRNNISQMVYKHAVSTIVPSRNI) enclose the Sm domain. The segment at 78–106 (EDEAGEEISAEYTPNAEGQAEATADPLYD) is disordered.

The protein belongs to the Hfq family. As to quaternary structure, homohexamer.

In terms of biological role, RNA chaperone that binds small regulatory RNA (sRNAs) and mRNAs to facilitate mRNA translational regulation in response to envelope stress, environmental stress and changes in metabolite concentrations. Also binds with high specificity to tRNAs. The polypeptide is RNA-binding protein Hfq (Dichelobacter nodosus (strain VCS1703A)).